Consider the following 375-residue polypeptide: Porin Omp2b (375 aa).

A signal peptide spans 1–22; the sequence is MNIKSLLLGSAAALVAASGAQA.

This sequence belongs to the alphaproteobacteria porin family. In terms of assembly, homotrimer.

Its subcellular location is the cell outer membrane. Functionally, forms passive diffusion pores that allow small molecular weight hydrophilic materials across the outer membrane. This chain is Porin Omp2b (omp2b), found in Brucella suis.